Here is a 95-residue protein sequence, read N- to C-terminus: DNA-directed RNA polymerase subunit omega (95 aa).

The protein belongs to the RNA polymerase subunit omega family. The RNAP catalytic core consists of 2 alpha, 1 beta, 1 beta' and 1 omega subunit. When a sigma factor is associated with the core the holoenzyme is formed, which can initiate transcription.

The enzyme catalyses RNA(n) + a ribonucleoside 5'-triphosphate = RNA(n+1) + diphosphate. Functionally, promotes RNA polymerase assembly. Latches the N- and C-terminal regions of the beta' subunit thereby facilitating its interaction with the beta and alpha subunits. The chain is DNA-directed RNA polymerase subunit omega from Colwellia psychrerythraea (strain 34H / ATCC BAA-681) (Vibrio psychroerythus).